Reading from the N-terminus, the 307-residue chain is UAP56-interacting factor (307 aa).

Low complexity predominate over residues 1–25 (MSGFGAAALLSGSSAAAGTRSGSSD). Disordered stretches follow at residues 1–28 (MSGFGAAALLSGSSAAAGTRSGSSDSLE) and 41–85 (NKKE…KNHL). The short motif at 26–44 (SLEKIDMSLDDIIKLNKKE) is the UAP56-binding motif element. Over residues 57-78 (LQQNRTQQFRTPGSKWGIQQQK) the composition is skewed to polar residues.

This sequence belongs to the UIF family. In terms of tissue distribution, widely expressed.

It localises to the nucleus. It is found in the nucleoplasm. The protein resides in the nucleus speckle. In terms of biological role, required for mRNA export from the nucleus to the cytoplasm. Acts as an adapter that uses the DDX39B/UAP56-NFX1 pathway to ensure efficient mRNA export and delivering to the nuclear pore. This is UAP56-interacting factor (FYTTD1) from Gallus gallus (Chicken).